A 335-amino-acid polypeptide reads, in one-letter code: Matrix protein (335 aa).

The protein belongs to the morbillivirus/respirovirus/rubulavirus M protein family. Homodimer. Dimerization is critical for virion formation. Interacts with host ANP32B.

Its subcellular location is the virion. It is found in the host cell membrane. Functionally, the M protein has a crucial role in virus assembly and interacts with the RNP complex as well as with the viral membrane. Associates with phosphatidylserine (PS) and phosphatidylinositol 4,5-bisphosphate (PIP2) at the plasma membrane. Interaction with PIP2 triggers matrix protein lattice polymerization. Matrix proteins induce host membrane deformation and curvature necessary for virion assembly/budding. In Measles virus (strain Edmonston-AIK-C vaccine) (MeV), this protein is Matrix protein (M).